The primary structure comprises 75 residues: Exodeoxyribonuclease 7 small subunit (75 aa).

Belongs to the XseB family. In terms of assembly, heterooligomer composed of large and small subunits.

The protein localises to the cytoplasm. The enzyme catalyses Exonucleolytic cleavage in either 5'- to 3'- or 3'- to 5'-direction to yield nucleoside 5'-phosphates.. Functionally, bidirectionally degrades single-stranded DNA into large acid-insoluble oligonucleotides, which are then degraded further into small acid-soluble oligonucleotides. The polypeptide is Exodeoxyribonuclease 7 small subunit (Thermotoga maritima (strain ATCC 43589 / DSM 3109 / JCM 10099 / NBRC 100826 / MSB8)).